The following is a 485-amino-acid chain: Arginine/agmatine antiporter (485 aa).

A run of 12 helical transmembrane segments spans residues 12–34 (GTIA…SLPQ), 38–60 (ATAG…FFIA), 89–111 (IGFT…YAVI), 126–148 (GGNT…FIVL), 155–177 (SIIN…ILTA), 211–230 (TMLV…VMSG), 243–265 (VLGF…GSLF), 291–313 (VLMN…IIVA), 363–385 (WNTM…AAFL), 400–422 (IKAP…LIYA), 427–446 (YLFM…IDAG), and 461–483 (IVGM…TGRI).

The protein belongs to the amino acid-polyamine-organocation (APC) superfamily. Basic amino acid/polyamine antiporter (APA) (TC 2.A.3.2) family.

The protein resides in the cell inner membrane. In terms of biological role, catalyzes the exchange of L-arginine for agmatine. The arginine uptake by the bacterium in the macrophage may be a virulence factor against the host innate immune response. This Chlamydia pneumoniae (Chlamydophila pneumoniae) protein is Arginine/agmatine antiporter (aaxC).